The following is a 185-amino-acid chain: Shikimate kinase (185 aa).

15-20 contributes to the ATP binding site; sequence GAGKST. Position 19 (Ser19) interacts with Mg(2+). 3 residues coordinate substrate: Asp37, Arg61, and Gly83. Position 121 (Arg121) interacts with ATP. Arg146 provides a ligand contact to substrate.

It belongs to the shikimate kinase family. In terms of assembly, monomer. The cofactor is Mg(2+).

It is found in the cytoplasm. The catalysed reaction is shikimate + ATP = 3-phosphoshikimate + ADP + H(+). It functions in the pathway metabolic intermediate biosynthesis; chorismate biosynthesis; chorismate from D-erythrose 4-phosphate and phosphoenolpyruvate: step 5/7. Catalyzes the specific phosphorylation of the 3-hydroxyl group of shikimic acid using ATP as a cosubstrate. This is Shikimate kinase from Blochmanniella floridana.